The primary structure comprises 130 residues: Type VII secretion system extracellular protein C (130 aa).

The protein belongs to the EsxC family. Forms both homodimers and heterodimers with EsxA. Homodimerization is calcium-dependent.

The protein localises to the secreted. In Staphylococcus aureus (strain USA300), this protein is Type VII secretion system extracellular protein C.